Consider the following 294-residue polypeptide: tRNA dimethylallyltransferase (294 aa).

10 to 17 contributes to the ATP binding site; it reads GPTAVGKT. 12-17 is a binding site for substrate; sequence TAVGKT. The segment at 35–38 is interaction with substrate tRNA; the sequence is DSQQ.

Belongs to the IPP transferase family. Monomer. Requires Mg(2+) as cofactor.

The catalysed reaction is adenosine(37) in tRNA + dimethylallyl diphosphate = N(6)-dimethylallyladenosine(37) in tRNA + diphosphate. Functionally, catalyzes the transfer of a dimethylallyl group onto the adenine at position 37 in tRNAs that read codons beginning with uridine, leading to the formation of N6-(dimethylallyl)adenosine (i(6)A). The sequence is that of tRNA dimethylallyltransferase from Streptococcus pneumoniae (strain ATCC 700669 / Spain 23F-1).